We begin with the raw amino-acid sequence, 36 residues long: Photosystem II reaction center protein Y (36 aa).

The Lumenal segment spans residues 1–4; the sequence is MDSR. Residues 5–23 traverse the membrane as a helical segment; sequence LLIVLIPVLAAASWAVYNI. Residues 24 to 36 are Stromal-facing; it reads GRVALQQFRKMTS.

The protein belongs to the PsbY family. PSII is composed of 1 copy each of membrane proteins PsbA, PsbB, PsbC, PsbD, PsbE, PsbF, PsbH, PsbI, PsbJ, PsbK, PsbL, PsbM, PsbT, PsbX, PsbY, PsbZ, Psb30/Ycf12, at least 3 peripheral proteins of the oxygen-evolving complex and a large number of cofactors. It forms dimeric complexes.

The protein localises to the plastid. Its subcellular location is the chloroplast thylakoid membrane. Functionally, loosely associated component of the core of photosystem II (PSII), it is not always seen in crystals. PSII is a light-driven water plastoquinone oxidoreductase, using light energy to abstract electrons from H(2)O, generating a proton gradient subsequently used for ATP formation. The chain is Photosystem II reaction center protein Y from Porphyra purpurea (Red seaweed).